The primary structure comprises 421 residues: Serine--tRNA ligase (421 aa).

Residue 225–227 coordinates L-serine; it reads TAE. ATP-binding positions include 256–258 and Val272; that span reads RSE. Glu279 contacts L-serine. Residue 345–348 coordinates ATP; sequence ETHS. Thr380 lines the L-serine pocket.

Belongs to the class-II aminoacyl-tRNA synthetase family. Type-1 seryl-tRNA synthetase subfamily. In terms of assembly, homodimer. The tRNA molecule binds across the dimer.

Its subcellular location is the cytoplasm. It carries out the reaction tRNA(Ser) + L-serine + ATP = L-seryl-tRNA(Ser) + AMP + diphosphate + H(+). The catalysed reaction is tRNA(Sec) + L-serine + ATP = L-seryl-tRNA(Sec) + AMP + diphosphate + H(+). The protein operates within aminoacyl-tRNA biosynthesis; selenocysteinyl-tRNA(Sec) biosynthesis; L-seryl-tRNA(Sec) from L-serine and tRNA(Sec): step 1/1. Its function is as follows. Catalyzes the attachment of serine to tRNA(Ser). Is also able to aminoacylate tRNA(Sec) with serine, to form the misacylated tRNA L-seryl-tRNA(Sec), which will be further converted into selenocysteinyl-tRNA(Sec). The protein is Serine--tRNA ligase of Thermus thermophilus (strain ATCC 27634 / DSM 579 / HB8).